The sequence spans 307 residues: Mitochondrial brown fat uncoupling protein 1 (307 aa).

At 1 to 10 the chain is on the mitochondrial intermembrane side; sequence MVSQTTSEVQ. The chain crosses the membrane as a helical span at residues 11 to 32; that stretch reads PTMGVKIFSAGVAACLADIITF. Solcar repeat units follow at residues 11 to 102, 111 to 201, and 210 to 295; these read PTMG…VQEY, PTLV…MKGA, and DDVP…LKKE. The Mitochondrial matrix segment spans residues 33-73; it reads PLDTAKVRLQIQGEGQTSSTIRYKGVLGTITTLAKTEGLPK. Residue K56 participates in fatty acid 16:0 binding. The helical transmembrane segment at 74 to 96 threads the bilayer; it reads LYSGLPAGIQRQISFASLRIGLY. Topologically, residues 97-116 are mitochondrial intermembrane; sequence DTVQEYFSSGKETPPTLVNR. The chain crosses the membrane as a helical span at residues 117-133; sequence ISAGLMTGGVAVFIGQP. Over 134 to 178 the chain is Mitochondrial matrix; sequence TEVVKVRLQAQSHLHGIKPRYTGTYNAYRIIATTESLSTLWKGTT. A helical transmembrane segment spans residues 179–195; the sequence is PNLLRNVIINCTELVTY. Residues 196–212 are Mitochondrial intermembrane-facing; the sequence is DLMKGALVNNQILADDV. The chain crosses the membrane as a helical span at residues 213–232; it reads PCHLLSALVAGFCTTFLASP. Residues 233–266 are Mitochondrial matrix-facing; it reads ADVVKTRFINSLPGQYPSVPSCAMTMFTKEGPTA. Residue C254 is modified to Cysteine sulfenic acid (-SOH). Residues 267 to 289 traverse the membrane as a helical segment; it reads FFKGFVPSFLRLASWNVIMFVCF. K269 contacts fatty acid 16:0. At 290 to 307 the chain is on the mitochondrial intermembrane side; the sequence is EQLKKELMKSRQTVDCTT.

It belongs to the mitochondrial carrier (TC 2.A.29) family. In terms of assembly, most probably functions as a monomer. Binds one purine nucleotide per monomer. However, has also been suggested to function as a homodimer or a homotetramer. Tightly associates with cardiolipin in the mitochondrion inner membrane; may stabilize and regulate its activity. Post-translationally, may undergo sulfenylation upon cold exposure. May increase the sensitivity of UCP1 thermogenic function to the activation by noradrenaline probably through structural effects. May undergo ubiquitin-mediated proteasomal degradation. In terms of tissue distribution, brown adipose tissue.

Its subcellular location is the mitochondrion inner membrane. It carries out the reaction H(+)(in) = H(+)(out). Has no constitutive proton transporter activity and has to be activated by long-chain fatty acids/LCFAs. Inhibited by purine nucleotides. Both purine nucleotides and LCFAs bind the cytosolic side of the transporter and directly compete to activate or inhibit it. Activated by noradrenaline and reactive oxygen species. Despite lacking canonical translational encoding for selenocysteine, a small pool of the protein has been observed to selectively incorporate selenocysteine at 'Cys-254'. Selenocysteine-modified protein is highly sensitive to redox modification and may constitute a pool of protein highly sensitive to activation by elevated levels of reactive oxygen species (ROS). Functionally, mitochondrial protein responsible for thermogenic respiration, a specialized capacity of brown adipose tissue and beige fat that participates in non-shivering adaptive thermogenesis to temperature and diet variations and more generally to the regulation of energy balance. Functions as a long-chain fatty acid/LCFA and proton symporter, simultaneously transporting one LCFA and one proton through the inner mitochondrial membrane. However, LCFAs remaining associated with the transporter via their hydrophobic tails, it results in an apparent transport of protons activated by LCFAs. Thereby, dissipates the mitochondrial proton gradient and converts the energy of substrate oxydation into heat instead of ATP. Regulates the production of reactive oxygen species/ROS by mitochondria. This chain is Mitochondrial brown fat uncoupling protein 1, found in Phodopus sungorus (Striped hairy-footed hamster).